Consider the following 491-residue polypeptide: MQVIETLAEGLKRELKVVIPADEMQTRMNERLADVKDRVRINGFRPGKVPVAHLKKVYGKSIMAELVNEIVRDKPTEILTSRGEKSATQPEVAMTEDEAEADKILKAEADFEFTLAYEIIPAIELKDATGIKVTREVVEIAEDEVNEQILRIAESARTYESKKGKAANGDRVTIDYLGKVDGVAFDGGKDEDAELVLGSNRFIPGFEEQLVGVKAGDEKTITVTFPADYPAANLAGKEATFDITVKDVAAAAPIEINDELATKLGLESADKLKEIVRGQIESQYGSVTRQKVKRQLLDQLDELYQFETPERLVNAEFENIWRQINTDLEQAGKTFADEDTTEEEARAEYRKLAERRVRLGLVLSEIGEKAGVQVSDDEMQRSLFEQLRQFPGQEKQILDYFKNTPGAAASLRAPLFEEKVVDHLLSEVAVTDKTVSKDELMAEDEAEDKPAKKAPAKKKAAAKAEAGEGEEAAAPKKKAPAKKKAADDSAE.

A PPIase FKBP-type domain is found at 169 to 254 (GDRVTIDYLG…VKDVAAAAPI (86 aa)). The interval 433–491 (KTVSKDELMAEDEAEDKPAKKAPAKKKAAAKAEAGEGEEAAAPKKKAPAKKKAADDSAE) is disordered. Residues 452-461 (KKAPAKKKAA) are compositionally biased toward basic residues.

It belongs to the FKBP-type PPIase family. Tig subfamily.

It localises to the cytoplasm. The catalysed reaction is [protein]-peptidylproline (omega=180) = [protein]-peptidylproline (omega=0). Involved in protein export. Acts as a chaperone by maintaining the newly synthesized protein in an open conformation. Functions as a peptidyl-prolyl cis-trans isomerase. The chain is Trigger factor from Sinorhizobium fredii (strain NBRC 101917 / NGR234).